Reading from the N-terminus, the 235-residue chain is Voltage-gated hydrogen channel 1 (235 aa).

Residues 1–65 (MSRYLKHFTA…SLRKLYSTER (65 aa)) lie on the Cytoplasmic side of the membrane. Residues 66–86 (FQIVVVCLVVLDAIFVLCELL) traverse the membrane as a helical segment. The Extracellular segment spans residues 87 to 103 (IDLSIIEADHHRIAPQV). A helical transmembrane segment spans residues 104–126 (FHYLSLALLTFFMVELAGKIFAY). Topologically, residues 127 to 134 (RLEFLHHK) are cytoplasmic. Residues 135–155 (FEVFDGIVVVVSFILDIIYIS) traverse the membrane as a helical segment. Over 156–162 (KEDAFDA) the chain is Extracellular. The chain crosses the membrane as a helical span at residues 163-183 (MGLLILLRLWRVARIINGILV). Topologically, residues 184-235 (SVQNRANHRVEKLKEINESLVHQVNELKEQNTKMDQENVRLRALLKDHSIDF) are cytoplasmic. Positions 187-231 (NRANHRVEKLKEINESLVHQVNELKEQNTKMDQENVRLRALLKDH) form a coiled coil.

Belongs to the hydrogen channel family. In terms of assembly, homodimer.

Its subcellular location is the membrane. The protein resides in the cell membrane. Mediates the voltage-dependent proton permeability of excitable membranes. Forms a proton-selective channel through which protons may pass in accordance with their electrochemical gradient. The chain is Voltage-gated hydrogen channel 1 (hvcn1) from Danio rerio (Zebrafish).